Reading from the N-terminus, the 299-residue chain is Farnesyl diphosphate synthase (299 aa).

Isopentenyl diphosphate is bound by residues Lys-45, Arg-48, and His-77. Mg(2+) contacts are provided by Asp-84 and Asp-90. Arg-95 contributes to the (2E)-geranyl diphosphate binding site. An isopentenyl diphosphate-binding site is contributed by Arg-96. Residues Lys-181, Thr-182, Gln-220, and Lys-237 each coordinate (2E)-geranyl diphosphate.

This sequence belongs to the FPP/GGPP synthase family. The cofactor is Mg(2+).

It is found in the cytoplasm. It carries out the reaction isopentenyl diphosphate + (2E)-geranyl diphosphate = (2E,6E)-farnesyl diphosphate + diphosphate. This is Farnesyl diphosphate synthase (ispA) from Escherichia coli (strain K12).